The following is a 446-amino-acid chain: Exodeoxyribonuclease 7 large subunit (446 aa).

It belongs to the XseA family. In terms of assembly, heterooligomer composed of large and small subunits.

It is found in the cytoplasm. It carries out the reaction Exonucleolytic cleavage in either 5'- to 3'- or 3'- to 5'-direction to yield nucleoside 5'-phosphates.. Its function is as follows. Bidirectionally degrades single-stranded DNA into large acid-insoluble oligonucleotides, which are then degraded further into small acid-soluble oligonucleotides. This is Exodeoxyribonuclease 7 large subunit from Streptococcus equi subsp. zooepidemicus (strain MGCS10565).